The sequence spans 407 residues: Substance-P receptor (407 aa).

At 1 to 31 (MDNVLPVDSDLFPNISTNTSEPNQFVQPAWQ) the chain is on the extracellular side. Asparagine 14 and asparagine 18 each carry an N-linked (GlcNAc...) asparagine glycan. A helical membrane pass occupies residues 32–54 (IVLWAAAYTVIVVTSVVGNVVVM). The Cytoplasmic portion of the chain corresponds to 55-64 (WIILAHKRMR). A helical membrane pass occupies residues 65–86 (TVTNYFLVNLAFAEASMAAFNT). The Extracellular segment spans residues 87 to 106 (VVNFTYAVHNEWYYGLFYCK). Residues cysteine 105 and cysteine 180 are joined by a disulfide bond. A helical transmembrane segment spans residues 107-128 (FHNFFPIAAVFASIYSMTAVAF). Topologically, residues 129-148 (DRYMAIIHPLQPRLSATATK) are cytoplasmic. The helical transmembrane segment at 149 to 169 (VVICVIWVLALLLAFPQGYYS) threads the bilayer. Topologically, residues 170 to 194 (TTETMPGRVVCMIEWPSHPDKIYEK) are extracellular. Residues 195–219 (VYHICVTVLIYFLPLLVIGYAYTVV) traverse the membrane as a helical segment. Residues 220–248 (GITLWASEIPGDSSDRYHEQVSAKRKVVK) are Cytoplasmic-facing. The chain crosses the membrane as a helical span at residues 249–270 (MMIVVVCTFAICWLPFHIFFLL). Topologically, residues 271–283 (PYINPDLYLKKFI) are extracellular. The chain crosses the membrane as a helical span at residues 284–308 (QQVYLAIMWLAMSSTMYNPIIYCCL). The Cytoplasmic portion of the chain corresponds to 309-407 (NDRFRLGFKH…SSSFYSNMLS (99 aa)). Cysteine 322 carries S-palmitoyl cysteine lipidation. The segment at 363-407 (GAHEEDPEEGPKATPSSLDLTSNGSSRSNSKTVTESSSFYSNMLS) is disordered. Over residues 376-407 (TPSSLDLTSNGSSRSNSKTVTESSSFYSNMLS) the composition is skewed to polar residues.

This sequence belongs to the G-protein coupled receptor 1 family. Interacts with ARRB1.

The protein resides in the cell membrane. In terms of biological role, this is a receptor for the tachykinin neuropeptide substance P. It is probably associated with G proteins that activate a phosphatidylinositol-calcium second messenger system. The rank order of affinity of this receptor to tachykinins is: substance P &gt; substance K &gt; neuromedin-K. The polypeptide is Substance-P receptor (TACR1) (Cavia porcellus (Guinea pig)).